The sequence spans 175 residues: Large ribosomal subunit protein bL17m (175 aa).

A mitochondrion-targeting transit peptide spans methionine 1 to alanine 8. Residues aspartate 155–isoleucine 175 are disordered. A compositionally biased stretch (polar residues) spans serine 157 to isoleucine 175.

Belongs to the bacterial ribosomal protein bL17 family. In terms of assembly, component of the mitochondrial ribosome large subunit (39S) which comprises a 16S rRNA and about 50 distinct proteins.

The protein localises to the mitochondrion. The polypeptide is Large ribosomal subunit protein bL17m (MRPL17) (Pongo abelii (Sumatran orangutan)).